The sequence spans 443 residues: Proline--tRNA ligase (443 aa).

Belongs to the class-II aminoacyl-tRNA synthetase family. ProS type 2 subfamily. Homodimer.

It localises to the cytoplasm. It carries out the reaction tRNA(Pro) + L-proline + ATP = L-prolyl-tRNA(Pro) + AMP + diphosphate. In terms of biological role, catalyzes the attachment of proline to tRNA(Pro) in a two-step reaction: proline is first activated by ATP to form Pro-AMP and then transferred to the acceptor end of tRNA(Pro). The polypeptide is Proline--tRNA ligase (Zymomonas mobilis subsp. mobilis (strain ATCC 31821 / ZM4 / CP4)).